The following is a 241-amino-acid chain: Uridylate kinase (241 aa).

ATP contacts are provided by residues 10 to 13 (KLSG), Gly-53, and Arg-57. UMP-binding positions include Asp-72 and 133 to 140 (AGSPYFST). Residues Asn-161, Tyr-167, and Asp-170 each coordinate ATP.

Belongs to the UMP kinase family. Homohexamer.

It localises to the cytoplasm. The catalysed reaction is UMP + ATP = UDP + ADP. Its pathway is pyrimidine metabolism; CTP biosynthesis via de novo pathway; UDP from UMP (UMPK route): step 1/1. Inhibited by UTP. In terms of biological role, catalyzes the reversible phosphorylation of UMP to UDP. This is Uridylate kinase from Aster yellows witches'-broom phytoplasma (strain AYWB).